The chain runs to 247 residues: Proteasome subunit alpha type-7 (247 aa).

Belongs to the peptidase T1A family. As to quaternary structure, the 26S proteasome consists of a 20S proteasome core and two 19S regulatory subunits. The 20S proteasome core is composed of 28 subunits that are arranged in four stacked rings, resulting in a barrel-shaped structure. The two end rings are each formed by seven alpha subunits, and the two central rings are each formed by seven beta subunits. The catalytic chamber with the active sites is on the inside of the barrel.

The protein localises to the cytoplasm. Its subcellular location is the nucleus. The proteasome is a multicatalytic proteinase complex which is characterized by its ability to cleave peptides with Arg, Phe, Tyr, Leu, and Glu adjacent to the leaving group at neutral or slightly basic pH. The proteasome has an ATP-dependent proteolytic activity. The chain is Proteasome subunit alpha type-7 (PSA4) from Trypanosoma brucei brucei.